The primary structure comprises 682 residues: Serine/threonine-protein kinase PLK2 (682 aa).

A disordered region spans residues 25–67 (ACGGDSKKKRPQQPSEDGQSQAQVTPAAPHHHHHHSHSGPEIS). Positions 36–48 (QQPSEDGQSQAQV) are enriched in polar residues. The 253-residue stretch at 79–331 (YCRGKVLGKG…LDDIIRHDFF (253 aa)) folds into the Protein kinase domain. ATP-binding positions include 85-93 (LGKGGFAKC) and Lys108. The active-site Proton acceptor is the Asp202. Thr236 carries the phosphothreonine modification. Positions 402-430 (TSITQQPSKHRTDEELQPPPTTFAKSGTS) are disordered. POLO box domains lie at 500–578 (WVTK…YMEE) and 598–682 (YLLQ…QRCN).

It belongs to the protein kinase superfamily. Ser/Thr protein kinase family. CDC5/Polo subfamily. Interacts with CIB1. Interacts with NSF; causing NSF dissociation from GRIA2. Post-translationally, catalytic activity is enhanced by phosphorylation of Thr-236.

It localises to the cytoplasm. The protein resides in the cytoskeleton. Its subcellular location is the microtubule organizing center. It is found in the centrosome. The protein localises to the centriole. It localises to the cell projection. The protein resides in the dendrite. The catalysed reaction is L-seryl-[protein] + ATP = O-phospho-L-seryl-[protein] + ADP + H(+). It catalyses the reaction L-threonyl-[protein] + ATP = O-phospho-L-threonyl-[protein] + ADP + H(+). With respect to regulation, activated by phosphorylation of Thr-236. Once activated, activity is stimulated by binding target proteins. Functionally, tumor suppressor serine/threonine-protein kinase involved in synaptic plasticity, centriole duplication and G1/S phase transition. Polo-like kinases act by binding and phosphorylating proteins that are already phosphorylated on a specific motif recognized by the POLO box domains. Phosphorylates CPAP, NPM1, RAPGEF2, RASGRF1, SNCA, SIPA1L1 and SYNGAP1. Plays a key role in synaptic plasticity and memory by regulating the Ras and Rap protein signaling: required for overactivity-dependent spine remodeling by phosphorylating the Ras activator RASGRF1 and the Rap inhibitor SIPA1L1 leading to their degradation by the proteasome. Conversely, phosphorylates the Rap activator RAPGEF2 and the Ras inhibitor SYNGAP1, promoting their activity. Also regulates synaptic plasticity independently of kinase activity, via its interaction with NSF that disrupts the interaction between NSF and the GRIA2 subunit of AMPARs, leading to a rapid rundown of AMPAR-mediated current that occludes long term depression. Required for procentriole formation and centriole duplication by phosphorylating CPAP and NPM1, respectively. Its induction by p53/TP53 suggests that it may participate in the mitotic checkpoint following stress. In Rattus norvegicus (Rat), this protein is Serine/threonine-protein kinase PLK2 (Plk2).